Consider the following 447-residue polypeptide: High-affinity gluconate transporter (447 aa).

The chain crosses the membrane as a helical span at residues 1–21 (MHVLNILWVVFGIGLMLVLNL). Residues 22–28 (KFKINSM) are Periplasmic-facing. A helical membrane pass occupies residues 29–49 (VALLVAALSVGMLAGMDLMSL). Topologically, residues 50-54 (LHTMK) are cytoplasmic. The chain crosses the membrane as a helical span at residues 55 to 75 (AGFGNTLGELAIIVVFGAVIG). Over 76-103 (KLMVDSGAAHQIAHTLLARLGLRYVQLS) the chain is Periplasmic. A helical membrane pass occupies residues 104–124 (VIIIGLIFGLAMFYEVAFIML). Residues 125 to 126 (AP) are Cytoplasmic-facing. Residues 127-147 (LVIVIAAEAKIPFLKLAIPAV) traverse the membrane as a helical segment. Topologically, residues 148-175 (AAATTAHSLFPPQPGPVALVNAYGADMG) are periplasmic. Residues 176–196 (MVYIYGVLVTIPSVICAGLIL) form a helical membrane-spanning segment. The Cytoplasmic segment spans residues 197–224 (PKFLGNLERPTPSFLKADQPVDMNNLPS). The chain crosses the membrane as a helical span at residues 225 to 245 (FGVSILVPLIPAIIMISTTIA). The Periplasmic segment spans residues 246–260 (NIWLVKDTPAWEVVN). Residues 261 to 281 (FIGSSPIAMFIAMVVAFVLFG) traverse the membrane as a helical segment. The Cytoplasmic portion of the chain corresponds to 282–294 (TARGHDMQWVMNA). Residues 295-315 (FESAVKSIAMVILIIGAGGVL) form a helical membrane-spanning segment. Topologically, residues 316–329 (KQTIIDTGIGDTIG) are periplasmic. Residues 330-350 (MLMSHGNISPYIMAWLITVLI) form a helical membrane-spanning segment. Residue Arg351 is a topological domain, cytoplasmic. The chain crosses the membrane as a helical span at residues 352-372 (LATGQGVVSAMTAAGIISAAI). The Periplasmic segment spans residues 373 to 374 (LD). A helical membrane pass occupies residues 375-395 (PATGQLVGVNPALLVLATAAG). The Cytoplasmic segment spans residues 396 to 426 (SNTLTHINDASFWLFKGYFDLSVKDTLKTWG). The helical transmembrane segment at 427–447 (LLELVNSVVGLIIVLIISMVA) threads the bilayer.

Belongs to the GntP permease family.

It is found in the cell inner membrane. Its pathway is carbohydrate acid metabolism; D-gluconate degradation. Its function is as follows. High-affinity gluconate transporter with fairly broad specificity, including low affinity for glucuronate, several disaccharides, and some hexoses, but not glucose. In Escherichia coli (strain K12), this protein is High-affinity gluconate transporter (gntP).